The chain runs to 500 residues: Protein O-glucosyltransferase 2 (500 aa).

An N-terminal signal peptide occupies residues 1–22 (MLRKLLLLLMSCIIFLTRRSKA). Residues 23–128 (AAAASASKTL…LVGKSPYVLR (106 aa)) form a Filamin repeat. Residues Asn60 and Asn259 are each glycosylated (N-linked (GlcNAc...) asparagine). A Prevents secretion from ER motif is present at residues 497 to 500 (RDEL).

The protein belongs to the KDELC family.

It is found in the endoplasmic reticulum lumen. It carries out the reaction L-seryl-[EGF-like domain protein] + UDP-alpha-D-glucose = 3-O-(beta-D-glucosyl)-L-seryl-[EGF-like domain protein] + UDP + H(+). It catalyses the reaction L-seryl-[EGF-like domain protein] + UDP-alpha-D-xylose = 3-O-(beta-D-xylosyl)-L-seryl-[EGF-like domain protein] + UDP + H(+). It participates in protein modification; protein glycosylation. Protein glucosyltransferase that catalyzes the transfer of glucose from UDP-glucose to a serine residue within the consensus sequence peptide C-X-N-T-X-G-S-F-X-C. Can also catalyze the transfer of xylose from UDP-xylose but less efficiently. The protein is Protein O-glucosyltransferase 2 (poglut2) of Danio rerio (Zebrafish).